We begin with the raw amino-acid sequence, 617 residues long: MKIPFDRWLGWPTLLLLLLGLWLLGSSLRDQRTVEAVPYSVFEQYLRDGQLTDVQVGDQVISARFTSPHDGKATVVAELVEPAMAERMSHYGVSYRRVRESNWLSQLLSWMAGPLLLLGFWYFMSRRIDGQQGGAGFLGIGRSHAKVYMEKSTGVRFDDVAGVDEAKAELQEIVDFLRDPKAHGRLGARMPKGVLLMGPTGTGKTLLARAVAGEAGVPFFSISGSEFIEMFVGVGAARVRDLFEQARAAAPAIIFIDELDALGKARGMGALVGGHDEREQTLNQLLVELDGFDPSVGVVLLAATNRPEILDPALLRAGRFDRQVLVDRPDRSGRRAILRVHAAKVRLAPDWDLDQVAAITVGFAGADLANLVNEAALVATRRRADAVTLADFTIAIERIVAGIEKKHGLLGEDEKRLVAYHELGHALTALALPSTDRVQKVSIVPHGIGALGYTLQRPSEDRHLQRRTELIDRLTVLLGGRAAEELVFGEPSTGAADDLARATGMARDMVLRFGMDEGLGPVAYADAPASPLVGLPAMPTLSERASPATAERIDAAVQALLGHARQRATEILRDNREMLDRTAAALMAQETLDEEALLALTAGLRAAGRPAAIRQVA.

At 1–7 the chain is on the cytoplasmic side; sequence MKIPFDR. Residues 8–28 traverse the membrane as a helical segment; sequence WLGWPTLLLLLLGLWLLGSSL. Topologically, residues 29–102 are periplasmic; that stretch reads RDQRTVEAVP…VSYRRVRESN (74 aa). A helical membrane pass occupies residues 103–123; that stretch reads WLSQLLSWMAGPLLLLGFWYF. Residues 124–617 are Cytoplasmic-facing; the sequence is MSRRIDGQQG…GRPAAIRQVA (494 aa). 198-205 lines the ATP pocket; the sequence is GPTGTGKT. His421 lines the Zn(2+) pocket. The active site involves Glu422. Residues His425 and Asp498 each contribute to the Zn(2+) site.

In the central section; belongs to the AAA ATPase family. It in the C-terminal section; belongs to the peptidase M41 family. Homohexamer. The cofactor is Zn(2+).

The protein resides in the cell inner membrane. Functionally, acts as a processive, ATP-dependent zinc metallopeptidase for both cytoplasmic and membrane proteins. Plays a role in the quality control of integral membrane proteins. The sequence is that of ATP-dependent zinc metalloprotease FtsH from Methylibium petroleiphilum (strain ATCC BAA-1232 / LMG 22953 / PM1).